The following is a 957-amino-acid chain: Glycine dehydrogenase (decarboxylating) 2 (957 aa).

Lysine 707 carries the N6-(pyridoxal phosphate)lysine modification.

It belongs to the GcvP family. As to quaternary structure, the glycine cleavage system is composed of four proteins: P, T, L and H. Pyridoxal 5'-phosphate serves as cofactor.

The catalysed reaction is N(6)-[(R)-lipoyl]-L-lysyl-[glycine-cleavage complex H protein] + glycine + H(+) = N(6)-[(R)-S(8)-aminomethyldihydrolipoyl]-L-lysyl-[glycine-cleavage complex H protein] + CO2. The glycine cleavage system catalyzes the degradation of glycine. The P protein binds the alpha-amino group of glycine through its pyridoxal phosphate cofactor; CO(2) is released and the remaining methylamine moiety is then transferred to the lipoamide cofactor of the H protein. This Pseudomonas fluorescens (strain Pf0-1) protein is Glycine dehydrogenase (decarboxylating) 2.